The primary structure comprises 154 residues: Iron sulfur cluster assembly protein 1, mitochondrial (154 aa).

Belongs to the NifU family. Component of the core Fe-S cluster (ISC) assembly machinery. Requires [2Fe-2S] cluster as cofactor.

The protein resides in the mitochondrion matrix. It participates in cofactor biosynthesis; iron-sulfur cluster biosynthesis. Functionally, scaffold protein for the de novo synthesis of iron-sulfur (Fe-S) clusters within mitochondria, which is required for maturation of both mitochondrial and cytoplasmic [2Fe-2S] and [4Fe-4S] proteins. First, a [2Fe-2S] cluster is transiently assembled on the scaffold protein ISU1. In a second step, the cluster is released from ISU1, transferred to a glutaredoxin, followed by the formation of mitochondrial [2Fe-2S] proteins, the synthesis of [4Fe-4S] clusters and their target-specific insertion into the recipient apoproteins. Cluster assembly on ISU1 depends on the function of the cysteine desulfurase complex NFS1-ISD11, which serves as the sulfur donor for cluster synthesis, the iron-binding protein frataxin as the putative iron donor, and the electron transfer chain comprised of ferredoxin reductase and ferredoxin, which receive their electrons from NADH. This Eremothecium gossypii (strain ATCC 10895 / CBS 109.51 / FGSC 9923 / NRRL Y-1056) (Yeast) protein is Iron sulfur cluster assembly protein 1, mitochondrial (ISU1).